A 176-amino-acid polypeptide reads, in one-letter code: Imidazoleglycerol-phosphate dehydratase (176 aa).

This sequence belongs to the imidazoleglycerol-phosphate dehydratase family.

The protein localises to the cytoplasm. It catalyses the reaction D-erythro-1-(imidazol-4-yl)glycerol 3-phosphate = 3-(imidazol-4-yl)-2-oxopropyl phosphate + H2O. Its pathway is amino-acid biosynthesis; L-histidine biosynthesis; L-histidine from 5-phospho-alpha-D-ribose 1-diphosphate: step 6/9. The protein is Imidazoleglycerol-phosphate dehydratase of Pyrococcus furiosus (strain ATCC 43587 / DSM 3638 / JCM 8422 / Vc1).